Consider the following 151-residue polypeptide: Large ribosomal subunit protein bL9 (151 aa).

This sequence belongs to the bacterial ribosomal protein bL9 family.

In terms of biological role, binds to the 23S rRNA. This Azoarcus sp. (strain BH72) protein is Large ribosomal subunit protein bL9.